Consider the following 640-residue polypeptide: 1,4-alpha-glucan branching enzyme GlgB (640 aa).

Catalysis depends on aspartate 318, which acts as the Nucleophile. Glutamate 371 (proton donor) is an active-site residue.

This sequence belongs to the glycosyl hydrolase 13 family. GlgB subfamily. As to quaternary structure, monomer.

The catalysed reaction is Transfers a segment of a (1-&gt;4)-alpha-D-glucan chain to a primary hydroxy group in a similar glucan chain.. The protein operates within glycan biosynthesis; glycogen biosynthesis. Catalyzes the formation of the alpha-1,6-glucosidic linkages in glycogen by scission of a 1,4-alpha-linked oligosaccharide from growing alpha-1,4-glucan chains and the subsequent attachment of the oligosaccharide to the alpha-1,6 position. This chain is 1,4-alpha-glucan branching enzyme GlgB, found in Francisella tularensis subsp. holarctica (strain LVS).